The primary structure comprises 421 residues: UDP-N-acetylglucosamine 1-carboxyvinyltransferase (421 aa).

23-24 (KN) is a phosphoenolpyruvate binding site. Residue Arg92 coordinates UDP-N-acetyl-alpha-D-glucosamine. Residue Cys116 is the Proton donor of the active site. The residue at position 116 (Cys116) is a 2-(S-cysteinyl)pyruvic acid O-phosphothioketal. UDP-N-acetyl-alpha-D-glucosamine is bound by residues 121–125 (RPVDL), 161–164 (KVSV), Asp306, and Ile328.

This sequence belongs to the EPSP synthase family. MurA subfamily.

It is found in the cytoplasm. The enzyme catalyses phosphoenolpyruvate + UDP-N-acetyl-alpha-D-glucosamine = UDP-N-acetyl-3-O-(1-carboxyvinyl)-alpha-D-glucosamine + phosphate. It functions in the pathway cell wall biogenesis; peptidoglycan biosynthesis. In terms of biological role, cell wall formation. Adds enolpyruvyl to UDP-N-acetylglucosamine. The sequence is that of UDP-N-acetylglucosamine 1-carboxyvinyltransferase from Vibrio vulnificus (strain CMCP6).